A 101-amino-acid chain; its full sequence is Replication restart protein PriB (101 aa).

Positions 1–101 (MTTNNLVLSG…IHAENVELKT (101 aa)) constitute an SSB domain.

This sequence belongs to the PriB family. As to quaternary structure, homodimer. Interacts with PriA and DnaT. Component of the replication restart primosome. Primosome assembly occurs via a 'hand-off' mechanism. PriA binds to replication forks, subsequently PriB then DnaT bind; DnaT then displaces ssDNA to generate the helicase loading substrate.

In terms of biological role, involved in the restart of stalled replication forks, which reloads the replicative helicase on sites other than the origin of replication; the PriA-PriB pathway is the major replication restart pathway. During primosome assembly it facilitates complex formation between PriA and DnaT on DNA; stabilizes PriA on DNA. Stimulates the DNA unwinding activity of PriA helicase. The sequence is that of Replication restart protein PriB from Shewanella oneidensis (strain ATCC 700550 / JCM 31522 / CIP 106686 / LMG 19005 / NCIMB 14063 / MR-1).